The sequence spans 1033 residues: Potassium-transporting ATPase alpha chain 2 (1033 aa).

At 1–96 the chain is on the cytoplasmic side; that stretch reads MRRKTLEIYS…NALSPPKQTP (96 aa). A helical transmembrane segment spans residues 97–117; that stretch reads EIIKFLKQMIGGFSILLWVGA. Residues 118–140 lie on the Lumenal side of the membrane; sequence ILCWIAYGIQYASNQSGSLDNVY. A helical membrane pass occupies residues 141–161; it reads LGVVLALVVILTGIFAYYQEA. The Cytoplasmic portion of the chain corresponds to 162–297; it reads KSTNIMSSFS…NEKTPIATEI (136 aa). A helical membrane pass occupies residues 298–317; it reads EHFVHIVAGVAVSIGILFFI. Residues 318–329 lie on the Lumenal side of the membrane; that stretch reads IAVSLKYRVLDS. The chain crosses the membrane as a helical span at residues 330–347; it reads IIFLIGIIVANVPEGLLA. Residues 348–781 lie on the Cytoplasmic side of the membrane; it reads TVTVTLSLTA…EEGRLIFDNL (434 aa). D385 functions as the 4-aspartylphosphate intermediate in the catalytic mechanism. Mg(2+) is bound by residues D726 and D730. Residues 782–801 traverse the membrane as a helical segment; the sequence is KKTIAYTLTKNIAELCPFLV. The Lumenal segment spans residues 802–811; that stretch reads YIIVGLPLPI. A helical membrane pass occupies residues 812–832; sequence GTITILFIDLGTDIIPSIALA. Residues 833 to 852 lie on the Cytoplasmic side of the membrane; sequence YEKVESDIMNRKPRHKKKDR. Residues 853–875 form a helical membrane-spanning segment; it reads LVNHQLAIYSYLHIGLMQALGAF. The Lumenal segment spans residues 876–927; the sequence is LVYFTVYAQQGFWPTSLIQLRVKWEQDYVNDLEDSYGQQWTRYQRKYLEWTG. A helical membrane pass occupies residues 928-947; sequence YTAFFVGIMVQQIADLIIRK. Residues 948–961 are Cytoplasmic-facing; that stretch reads TRRNSIFQQGLFRN. S952 bears the Phosphoserine; by PKA mark. The chain crosses the membrane as a helical span at residues 962–980; it reads KVIWVGITSQIIVALILSC. The Lumenal portion of the chain corresponds to 981–995; the sequence is GLGSITALNFTMLRV. A helical transmembrane segment spans residues 996–1016; the sequence is QYWFVAVPHAILIWVYDEVRK. Topologically, residues 1017 to 1033 are cytoplasmic; that stretch reads LFLRLYPGSWWDKNMYY.

It belongs to the cation transport ATPase (P-type) (TC 3.A.3) family. Type IIC subfamily. In terms of assembly, composed of two subunits: alpha (catalytic) and beta. In terms of tissue distribution, found in skin, kidney and distal colon.

The protein resides in the membrane. It catalyses the reaction K(+)(out) + ATP + H2O + H(+)(in) = K(+)(in) + ADP + phosphate + 2 H(+)(out). Its function is as follows. Catalyzes the hydrolysis of ATP coupled with the exchange of H(+) and K(+) ions across the plasma membrane. Responsible for potassium absorption in various tissues. The protein is Potassium-transporting ATPase alpha chain 2 (ATP12A) of Cavia porcellus (Guinea pig).